The following is a 261-amino-acid chain: MTDEPALESAALPVLCLENTSAVYAGGVVALSRFNLEVQAGEFCVILGPSGSGKSTLLRLISGLVPTSSGTVTIGGIKMAPPTRRKARQRLGMVHQDHGLIDRLSVLDNVMAGCAGSLPFWRLMLRMYPRPVVDAACQLLDEVGLTEAQANRRARELSGGQRQRVGIARALMGTPLLILADEPVASLDPQTSRIILALLRRAAKDRGIAVLCSLHQMDLAREFADRIVVMRNGRPVFNDCPAELSGFLERSAIPPKRSGAA.

Positions 15–257 constitute an ABC transporter domain; sequence LCLENTSAVY…LERSAIPPKR (243 aa). Residue 48–55 coordinates ATP; it reads GPSGSGKS.

This sequence belongs to the ABC transporter superfamily. Phosphonates importer (TC 3.A.1.9.1) family. In terms of assembly, the complex is composed of two ATP-binding proteins (PhnC), two transmembrane proteins (PhnE) and a solute-binding protein (PhnD).

The protein localises to the cell inner membrane. The catalysed reaction is phosphonate(out) + ATP + H2O = phosphonate(in) + ADP + phosphate + H(+). In terms of biological role, part of the ABC transporter complex PhnCDE involved in phosphonates import. Responsible for energy coupling to the transport system. This chain is Phosphonates import ATP-binding protein PhnC, found in Hyphomonas neptunium (strain ATCC 15444).